Here is a 147-residue protein sequence, read N- to C-terminus: Hemoglobin subunit deltaH (147 aa).

Residues 3 to 147 enclose the Globin domain; sequence RLTDSEKAEV…MANALAHKYH (145 aa). Heme b contacts are provided by H64 and H93.

The protein belongs to the globin family. Heterotetramer of two delta chains and two alpha chains. Red blood cells.

The polypeptide is Hemoglobin subunit deltaH (Heterohyrax brucei (Yellow-spotted hyrax)).